Here is a 150-residue protein sequence, read N- to C-terminus: Endoribonuclease YbeY (150 aa).

The Zn(2+) site is built by His113, His117, and His123.

The protein belongs to the endoribonuclease YbeY family. The cofactor is Zn(2+).

The protein resides in the cytoplasm. Single strand-specific metallo-endoribonuclease involved in late-stage 70S ribosome quality control and in maturation of the 3' terminus of the 16S rRNA. The polypeptide is Endoribonuclease YbeY (Wolbachia sp. subsp. Drosophila simulans (strain wRi)).